The sequence spans 450 residues: Phosphoglucosamine mutase 2 (450 aa).

Ser-101 functions as the Phosphoserine intermediate in the catalytic mechanism. The Mg(2+) site is built by Ser-101, Asp-245, Asp-247, and Asp-249. Ser-101 bears the Phosphoserine mark.

Belongs to the phosphohexose mutase family. The cofactor is Mg(2+). Activated by phosphorylation.

It catalyses the reaction alpha-D-glucosamine 1-phosphate = D-glucosamine 6-phosphate. Functionally, catalyzes the conversion of glucosamine-6-phosphate to glucosamine-1-phosphate. This chain is Phosphoglucosamine mutase 2, found in Shewanella sp. (strain MR-4).